A 152-amino-acid chain; its full sequence is UPF0178 protein YaiI (152 aa).

This sequence belongs to the UPF0178 family.

The sequence is that of UPF0178 protein YaiI from Escherichia coli O81 (strain ED1a).